Reading from the N-terminus, the 462-residue chain is Cysteine--tRNA ligase (462 aa).

Cysteine 24 contacts Zn(2+). Residues 26 to 36 (PTVYDDAHLGH) carry the 'HIGH' region motif. Zn(2+)-binding residues include cysteine 199, histidine 224, and glutamate 228. Positions 256-260 (KMSKS) match the 'KMSKS' region motif. Lysine 259 is an ATP binding site.

The protein belongs to the class-I aminoacyl-tRNA synthetase family. In terms of assembly, monomer. Requires Zn(2+) as cofactor.

It is found in the cytoplasm. It catalyses the reaction tRNA(Cys) + L-cysteine + ATP = L-cysteinyl-tRNA(Cys) + AMP + diphosphate. This Campylobacter jejuni subsp. jejuni serotype O:2 (strain ATCC 700819 / NCTC 11168) protein is Cysteine--tRNA ligase (cysS).